A 544-amino-acid chain; its full sequence is Probable protein kinase UbiB (544 aa).

The Protein kinase domain occupies 123–501; it reads DFDLVPLASA…KRQQATGKFL (379 aa). ATP is bound by residues 129 to 137 and Lys-152; that span reads LASASIAQV. Asp-287 (proton acceptor) is an active-site residue. The next 2 membrane-spanning stretches (helical) occupy residues 496 to 516 and 519 to 539; these read ATGKFLFGVGATLVVCSAILV and TYEQLSLATAIAGVTFWLFSW.

This sequence belongs to the ABC1 family. UbiB subfamily.

It is found in the cell inner membrane. It participates in cofactor biosynthesis; ubiquinone biosynthesis [regulation]. Functionally, is probably a protein kinase regulator of UbiI activity which is involved in aerobic coenzyme Q (ubiquinone) biosynthesis. The polypeptide is Probable protein kinase UbiB (Vibrio vulnificus (strain YJ016)).